The chain runs to 132 residues: Photosystem II extrinsic protein U (132 aa).

An N-terminal signal peptide occupies residues 1-29 (MKRLLSWLTGALVMAGLLSSLVLPSAVYA).

It belongs to the PsbU family. As to quaternary structure, PSII is composed of 1 copy each of membrane proteins PsbA, PsbB, PsbC, PsbD, PsbE, PsbF, PsbH, PsbI, PsbJ, PsbK, PsbL, PsbM, PsbT, PsbX, PsbY, PsbZ, Psb30/Ycf12, peripheral proteins PsbO, CyanoQ (PsbQ), PsbU, PsbV and a large number of cofactors. It forms dimeric complexes.

It localises to the cellular thylakoid membrane. Functionally, one of the extrinsic, lumenal subunits of photosystem II (PSII). PSII is a light-driven water plastoquinone oxidoreductase, using light energy to abstract electrons from H(2)O, generating a proton gradient subsequently used for ATP formation. The extrinsic proteins stabilize the structure of photosystem II oxygen-evolving complex (OEC), the ion environment of oxygen evolution and protect the OEC against heat-induced inactivation. This chain is Photosystem II extrinsic protein U, found in Synechococcus sp. (strain CC9902).